We begin with the raw amino-acid sequence, 306 residues long: Probable cobalamin biosynthesis protein CobD (306 aa).

Helical transmembrane passes span 54-74, 88-108, 155-175, 207-227, and 286-306; these read LFGF…AFEI, ISLY…IEFS, ITDS…PGAF, ILNF…APFY, and SLKA…ILFM.

This sequence belongs to the CobD/CbiB family.

Its subcellular location is the cell membrane. It functions in the pathway cofactor biosynthesis; adenosylcobalamin biosynthesis. Its function is as follows. Converts cobyric acid to cobinamide by the addition of aminopropanol on the F carboxylic group. This is Probable cobalamin biosynthesis protein CobD from Methanococcus maripaludis (strain DSM 14266 / JCM 13030 / NBRC 101832 / S2 / LL).